The chain runs to 522 residues: Maturase K (522 aa).

The protein belongs to the intron maturase 2 family. MatK subfamily.

It is found in the plastid. Its subcellular location is the chloroplast. Usually encoded in the trnK tRNA gene intron. Probably assists in splicing its own and other chloroplast group II introns. The chain is Maturase K from Iris tenax (Oregon iris).